We begin with the raw amino-acid sequence, 397 residues long: Nuclear egress protein 2 (397 aa).

Residues 1–358 (MEMNKVLHQD…GPSRPQSGPW (358 aa)) are Perinuclear space-facing. Disordered regions lie at residues 205–245 (RTAG…PPPP) and 291–332 (AAAG…PSLE). Ser-216 is modified (phosphoserine). 2 stretches are compositionally biased toward low complexity: residues 224–239 (PSCS…AAAG) and 291–301 (AAAGQDVGGSA). The segment covering 310–322 (SRRRGVSTHHRHP) has biased composition (basic residues). Residues 359 to 381 (LPARFATLGPLVLALLLVLALLW) form a helical membrane-spanning segment. The Nuclear portion of the chain corresponds to 382–397 (RGHGQSSSPTRSAHRD).

Belongs to the herpesviridae NEC2 protein family. Forms a heterohexameric complex with NEC1. Interacts with host UBA7 and RNF170; this interaction promotes UBA7 proteasomal degradation. Phosphorylated. Phosphorylation by viral kinase UL97 at Ser-216 plays an important role for correct viral nuclear egress complex (NEC) localization.

The protein localises to the host nucleus inner membrane. Plays an essential role in virion nuclear egress, the first step of virion release from infected cell. Within the host nucleus, NEC1 interacts with the newly formed capsid through the vertexes and directs it to the inner nuclear membrane by associating with NEC2. Induces the budding of the capsid at the inner nuclear membrane as well as its envelopment into the perinuclear space. There, the NEC1/NEC2 complex promotes the fusion of the enveloped capsid with the outer nuclear membrane and the subsequent release of the viral capsid into the cytoplasm where it will reach the secondary budding sites in the host Golgi or trans-Golgi network. Inhibits host ISGylation and subsequent innate antiviral response by targeting host UBA7 for proteasomal degradation. In Human cytomegalovirus (strain AD169) (HHV-5), this protein is Nuclear egress protein 2.